A 383-amino-acid polypeptide reads, in one-letter code: S-adenosylmethionine synthase (383 aa).

An ATP-binding site is contributed by H15. A Mg(2+)-binding site is contributed by D17. Position 43 (E43) interacts with K(+). Residues E56 and Q99 each coordinate L-methionine. The segment at Q99 to R109 is flexible loop. ATP-binding positions include D164–K166, R230–F231, D239, R245–K246, A262, and K266. D239 provides a ligand contact to L-methionine. K270 is a binding site for L-methionine.

The protein belongs to the AdoMet synthase family. Homotetramer; dimer of dimers. Mg(2+) serves as cofactor. K(+) is required as a cofactor.

The protein resides in the cytoplasm. It catalyses the reaction L-methionine + ATP + H2O = S-adenosyl-L-methionine + phosphate + diphosphate. It functions in the pathway amino-acid biosynthesis; S-adenosyl-L-methionine biosynthesis; S-adenosyl-L-methionine from L-methionine: step 1/1. Catalyzes the formation of S-adenosylmethionine (AdoMet) from methionine and ATP. The overall synthetic reaction is composed of two sequential steps, AdoMet formation and the subsequent tripolyphosphate hydrolysis which occurs prior to release of AdoMet from the enzyme. The sequence is that of S-adenosylmethionine synthase from Shewanella baltica (strain OS155 / ATCC BAA-1091).